A 282-amino-acid polypeptide reads, in one-letter code: Endo-1,4-beta-xylanase B (282 aa).

The N-terminal stretch at 1–39 (MGISSILLSALIAGGALALPAAEPVSFDIRDENITLARR) is a signal peptide. Asn-33 is a glycosylation site (N-linked (GlcNAc...) asparagine). Residues 40–219 (AEAINYNQDY…GSGSGQISLS (180 aa)) form the GH11 domain. Residue Glu-117 is the Nucleophile of the active site. Glu-206 acts as the Proton donor in catalysis. The tract at residues 214 to 245 (GQISLSKGTGGGSTTTTPTGPTSTSTAPSSGG) is disordered. Over residues 227–243 (TTTTPTGPTSTSTAPSS) the composition is skewed to low complexity. Positions 246-282 (TGAAQWGQCGGIGWTGPTTCVAPYTCKYENAYYSQCQ) constitute a CBM1 domain.

The protein belongs to the glycosyl hydrolase 11 (cellulase G) family.

The protein resides in the secreted. The catalysed reaction is Endohydrolysis of (1-&gt;4)-beta-D-xylosidic linkages in xylans.. Its pathway is glycan degradation; xylan degradation. With respect to regulation, significantly inhibited by the wheat xylanase inhibiting protein I (XIP-I) and the proteinaceous endoxylanase Triticum aestivum xylanase inhibitors I (TAXI-I), but not TAXI-II. Its function is as follows. Endo-1,4-beta-xylanase involved in the hydrolysis of xylan, a major structural heterogeneous polysaccharide found in plant biomass representing the second most abundant polysaccharide in the biosphere, after cellulose. This Talaromyces funiculosus (Fruitlet core rot fungus) protein is Endo-1,4-beta-xylanase B (xynB).